Reading from the N-terminus, the 125-residue chain is uncharacterized protein (125 aa).

The segment at 36 to 57 (EAKKAKEKQDSKTKDTDKKVDQ) is disordered. A helical membrane pass occupies residues 92-112 (ITIFLLIVLVSAIMIGIYFGI).

It localises to the membrane. This is an uncharacterized protein from Mycoplasma pneumoniae (strain ATCC 29342 / M129 / Subtype 1) (Mycoplasmoides pneumoniae).